We begin with the raw amino-acid sequence, 551 residues long: MPSRVLITSALPYANGPLHFGHIAGAYLPADVYARFRRLLGDDVLYICGSDEYGIAITLNAERAGMGYQEYVNMYHKIHKDTFDKLGISIDFFSRTTNPFHKKLVQDFYTELQSKGLIENQISLQLYSEEENRFLADRYVEGTCPKCGFDGARGDECQKCGADYEATDLVHPRSKLSGSQLVLKETEHAFLHLERMVEPLLAYIDTCYLPEHIRKFVTDYIKNLRPRAITRDLSWGIPVPDFPNKVFYVWFDAPIGYISGTMDWAASLNTPEAWKDFWLEDSTEYVQFIGKDNIPFHAAIFPAMELGQSIPYKKMDALVSSEFYLLEGCQFSKSEGNYIDIDTFLDTYSLDKLRYVLAATAPETSDSEFTFMDFKTRCNSELVGKFGNFIHRVLVFAEKNGFKELAYSANLLEDQDKQFLDRAQQIVRDAQEHYSQYSLRKACCAIMELAALGNVYFNDQAPWKLLKEGLSHRVEAVLFCACYCQKLLALISYPIIPGTAWEIWRMLSPKSLQLDSLDKDRVVDLWNRELLNFSEEVFSLTAPQLLFTIVD.

The 'HIGH' region motif lies at 12–22; sequence PYANGPLHFGH. The Zn(2+) site is built by cysteine 144, cysteine 147, cysteine 157, and cysteine 160. A 'KMSKS' region motif is present at residues 330–334; it reads QFSKS. Lysine 333 is a binding site for ATP.

Belongs to the class-I aminoacyl-tRNA synthetase family. MetG type 1 subfamily. As to quaternary structure, monomer. Zn(2+) serves as cofactor.

Its subcellular location is the cytoplasm. It carries out the reaction tRNA(Met) + L-methionine + ATP = L-methionyl-tRNA(Met) + AMP + diphosphate. Its function is as follows. Is required not only for elongation of protein synthesis but also for the initiation of all mRNA translation through initiator tRNA(fMet) aminoacylation. This chain is Methionine--tRNA ligase, found in Chlamydia abortus (strain DSM 27085 / S26/3) (Chlamydophila abortus).